The primary structure comprises 273 residues: R-spondin-3 (273 aa).

The N-terminal stretch at 1–21 (MHLRLISWFFIILNFMEYIGS) is a signal peptide. FU repeat units lie at residues 35–86 (PNVS…GYYG) and 92–135 (INKC…GLEA). N-linked (GlcNAc...) asparagine glycosylation is present at asparagine 36. 11 disulfides stabilise this stretch: cysteine 41-cysteine 48, cysteine 45-cysteine 54, cysteine 57-cysteine 76, cysteine 80-cysteine 95, cysteine 98-cysteine 105, cysteine 102-cysteine 111, cysteine 114-cysteine 125, cysteine 129-cysteine 142, cysteine 148-cysteine 190, cysteine 159-cysteine 166, and cysteine 199-cysteine 206. The TSP type-1 domain maps to 147–207 (HCEASEWSPW…KCTVQRKKCP (61 aa)). Residues 201–273 (VQRKKCPKGE…QKSVSVSTVH (73 aa)) are disordered. Positions 213-223 (RKGRERKRKKP) are enriched in basic residues. The segment covering 224–252 (NKEESKDAIPDNKGLEPSRETPEQRENKQ) has biased composition (basic and acidic residues).

Belongs to the R-spondin family. Interacts with the extracellular domain of FZD8 and LRP6. It however does not form a ternary complex with FZD8 and LRP6. Interacts with WNT1. Binds heparin. Interacts with LGR4, LGR5 and LGR6.

It is found in the secreted. Activator of the canonical Wnt signaling pathway by acting as a ligand for LGR4-6 receptors, which acts as a key regulator of angiogenesis. Upon binding to LGR4-6 (LGR4, LGR5 or LGR6), LGR4-6 associate with phosphorylated LRP6 and frizzled receptors that are activated by extracellular Wnt receptors, triggering the canonical Wnt signaling pathway to increase expression of target genes. Also regulates the canonical Wnt/beta-catenin-dependent pathway and non-canonical Wnt signaling by acting as an inhibitor of ZNRF3, an important regulator of the Wnt signaling pathway. Acts as a ligand for frizzled FZD8 and LRP6. May negatively regulate the TGF-beta pathway. Acts as a key regulator of angiogenesis by controlling vascular stability and pruning: acts by activating the non-canonical Wnt signaling pathway in endothelial cells. Can also amplify Wnt signaling pathway independently of LGR4-6 receptors, possibly by acting as a direct antagonistic ligand to RNF43 and ZNRF3. In Bos taurus (Bovine), this protein is R-spondin-3 (RSPO3).